Consider the following 677-residue polypeptide: MCGIFAYLNFHANKERRYILDVLFNGLRRLEYRGYDSAGIAIDNSSPSSSPLVFRQAGNIESLVNSVNEEITNTDLNLDEVFYFHAGIAHTRWATHGEPAPRNSHPQSSGPGDDFLVVHNGVITNYEVLKETLVRHGFTFESDTDTEVIPKLAKFVFDKANEEGGQTVTFCEVVFEVMRHLEGAYALIFKSWHYPNELIACKLGSPLLLGVKELDQGESNSHVFQDAHFLSKNDHPKEFFLSSDPHALVEHTKKVLVIEDGEVVNLKDGGVSILKFENERGRCNGLSRPASVERALSVLEMEVEQISKGKYDHYMQKEIHEQPESLTTTMRGRLIRGGSRKTKTVLLGGLKDHLKTIRRSRRIVFIGCGTSYNAALASRPILEELSGIPVSMEIASDLWDRQGPIYREDTAVFVSQSGETADTLLALDYARENGALCVGITNTVGSSIARKTHCGVHINAGAEIGVASTKAYTSQIVVMVMLALAIGSDTISSQKRREAIIDGLLDLPYKVKEVLKLDDEMKDLAQLLIDEQSLLVFGRGYNYATALEGALKVKEVALMHSEGILAGEMKHGPLALVDENLPIAVIATRDACFSKQQSVIQQLHARKGRLIVMCSKGDAASVSSSGSCRAIEVPQVEDCLQPVINIVPLQLLAYHLTVLRGHNVDQPRNLAKSVTTQ.

Cys2 acts as the Nucleophile in catalysis. Positions 2 to 269 (CGIFAYLNFH…DGEVVNLKDG (268 aa)) constitute a Glutamine amidotransferase type-2 domain. 2 consecutive SIS domains span residues 353-492 (HLKT…DTIS) and 524-667 (LAQL…VDQP). Residues 370–371 (TS), 415–417 (SQS), Thr420, and His571 each bind substrate.

In terms of assembly, homotetramer, may also exist as homodimers. In terms of tissue distribution, highly expressed in flowers specifically in mature anthers, mature pollen grains and pollen tubes. Barely observed in roots, leaves and stems.

It catalyses the reaction D-fructose 6-phosphate + L-glutamine = D-glucosamine 6-phosphate + L-glutamate. It participates in nucleotide-sugar biosynthesis; UDP-N-acetyl-alpha-D-glucosamine biosynthesis; alpha-D-glucosamine 6-phosphate from D-fructose 6-phosphate: step 1/1. Its function is as follows. Controls the flux of glucose into the hexosamine biosynthetic pathway (HBP) leading to glucosamine (GlcN) content homeostasis. Involved in regulating the availability of precursors for N- and O-linked glycosylation of proteins. Required during pollen maturation and pollen tube formation by triggering polar deposition of pectin and callose in the pollen cell wall. Promotes tolerance to tunicamycin (Tm), an inhibitor of proteins N-glycosylation in endoplasmic reticulum (ER). The polypeptide is Glutamine--fructose-6-phosphate aminotransferase [isomerizing] 1 (Arabidopsis thaliana (Mouse-ear cress)).